The chain runs to 360 residues: Photosystem II protein D1 (360 aa).

The next 3 membrane-spanning stretches (helical) occupy residues 29-46 (YIGW…TATS), 118-133 (HFLL…EWEL), and 142-156 (WIFV…AASA). His118 contributes to the chlorophyll a binding site. Tyr126 contributes to the pheophytin a binding site. [CaMn4O5] cluster is bound by residues Asp170 and Glu189. The helical transmembrane segment at 197-218 (FHMAGVAGVFGGSLFSAMHGSL) threads the bilayer. His198 provides a ligand contact to chlorophyll a. A quinone is bound by residues His215 and 264 to 265 (SF). Residue His215 participates in Fe cation binding. His272 contacts Fe cation. The chain crosses the membrane as a helical span at residues 274-288 (FLAAWPVVGIWLTAM). Residues His332, Glu333, Asp342, and Ala344 each contribute to the [CaMn4O5] cluster site. Positions 345 to 360 (SGDVLPVALNAPAVNG) are excised as a propeptide.

This sequence belongs to the reaction center PufL/M/PsbA/D family. In terms of assembly, PSII is composed of 1 copy each of membrane proteins PsbA, PsbB, PsbC, PsbD, PsbE, PsbF, PsbH, PsbI, PsbJ, PsbK, PsbL, PsbM, PsbT, PsbX, PsbY, PsbZ, Psb30/Ycf12, at least 3 peripheral proteins of the oxygen-evolving complex and a large number of cofactors. It forms dimeric complexes. Requires The D1/D2 heterodimer binds P680, chlorophylls that are the primary electron donor of PSII, and subsequent electron acceptors. It shares a non-heme iron and each subunit binds pheophytin, quinone, additional chlorophylls, carotenoids and lipids. D1 provides most of the ligands for the Mn4-Ca-O5 cluster of the oxygen-evolving complex (OEC). There is also a Cl(-1) ion associated with D1 and D2, which is required for oxygen evolution. The PSII complex binds additional chlorophylls, carotenoids and specific lipids. as cofactor. Post-translationally, tyr-161 forms a radical intermediate that is referred to as redox-active TyrZ, YZ or Y-Z. In terms of processing, C-terminally processed by CTPA; processing is essential to allow assembly of the oxygen-evolving complex and thus photosynthetic growth.

Its subcellular location is the plastid. The protein resides in the chloroplast thylakoid membrane. The enzyme catalyses 2 a plastoquinone + 4 hnu + 2 H2O = 2 a plastoquinol + O2. Functionally, photosystem II (PSII) is a light-driven water:plastoquinone oxidoreductase that uses light energy to abstract electrons from H(2)O, generating O(2) and a proton gradient subsequently used for ATP formation. It consists of a core antenna complex that captures photons, and an electron transfer chain that converts photonic excitation into a charge separation. The D1/D2 (PsbA/PsbD) reaction center heterodimer binds P680, the primary electron donor of PSII as well as several subsequent electron acceptors. The chain is Photosystem II protein D1 from Trieres chinensis (Marine centric diatom).